Here is a 79-residue protein sequence, read N- to C-terminus: Conotoxin VnMKLT1-01121 (79 aa).

The N-terminal stretch at 1 to 22 is a signal peptide; the sequence is MKLTCMMIVAVLFLTAWTFVTA. A propeptide spanning residues 23-48 is cleaved from the precursor; sequence DDSRNGLEYLFPKAHYEMNPEASKLN. 3 disulfide bridges follow: cysteine 53–cysteine 70, cysteine 60–cysteine 74, and cysteine 69–cysteine 78.

Belongs to the conotoxin O1 superfamily. Expressed by the venom duct.

Its subcellular location is the secreted. The protein is Conotoxin VnMKLT1-01121 of Conus ventricosus (Mediterranean cone).